A 935-amino-acid polypeptide reads, in one-letter code: Phosphoenolpyruvate carboxylase (935 aa).

Active-site residues include histidine 161 and lysine 593.

Belongs to the PEPCase type 1 family. Mg(2+) is required as a cofactor.

It catalyses the reaction oxaloacetate + phosphate = phosphoenolpyruvate + hydrogencarbonate. Its function is as follows. Forms oxaloacetate, a four-carbon dicarboxylic acid source for the tricarboxylic acid cycle. The polypeptide is Phosphoenolpyruvate carboxylase (Mycobacterium avium (strain 104)).